Here is a 182-residue protein sequence, read N- to C-terminus: MEALVCAFSELHIREDAVSQAQGRPGHPDAPPNIYEGGLGSPQPQCPSAQGSKPKNFRLRHLRGLGLYLESHPPPTGQCESHWLGRLMAGGCLPQPEGTAWALDLPQGTLGPRNSLCSALLEARLPRDSLGSSASSSSMDPDKGALPQPSPSRLRPKRSWGTWEEAMCPLCKRTRSGALERP.

2 disordered regions span residues alanine 17 to lysine 53 and aspartate 128 to serine 159. A compositionally biased stretch (polar residues) spans proline 42 to lysine 53. The segment covering serine 129–serine 138 has biased composition (low complexity).

This is an uncharacterized protein from Homo sapiens (Human).